We begin with the raw amino-acid sequence, 322 residues long: Atrochrysone carboxyl ACP thioesterase dmxR1 (322 aa).

Zn(2+) contacts are provided by histidine 105, histidine 107, aspartate 109, and histidine 110. Aspartate 109 serves as the catalytic Proton donor/acceptor.

This sequence belongs to the metallo-beta-lactamase superfamily. Zn(2+) is required as a cofactor.

The catalysed reaction is atrochrysone carboxyl-[ACP] + H2O = atrochrysone carboxylate + holo-[ACP] + H(+). It functions in the pathway secondary metabolite biosynthesis. Atrochrysone carboxyl ACP thioesterase; part of the gene cluster that mediates the biosynthesis of the dimeric xanthones cryptosporioptides. The pathway begins with the synthesis of atrochrysone thioester by the polyketide synthase dmx-nrPKS. The atrochrysone carboxyl ACP thioesterase dmxR1 then breaks the thioester bond and releases the atrochrysone carboxylic acid from dmx-nrPKS. Atrochrysone carboxylic acid is decarboxylated by the decarboxylase dmxR15, and oxidized by the anthrone oxygenase dmxR16 to yield emodin. Emodin is then reduced to emodin hydroquinone by the oxidoreductase dmxR7. A-ring reduction by the short chain dehydrogenase dmxR18, dehydration by the scytalone dehydratase-like protein dmxR17 and probable spontaneous re-oxidation, results in overall deoxygenation to chrysophanol. Baeyer-Villiger oxidation by the Baeyer-Villiger monooxygenase (BVMO) dmxR6 then yields monodictylactone in equilibrium with monodictyphenone. In the case of the cryptosporioptides biosynthesis, monodictylactone is reduced at C-12 to an alcohol (by the short chain dehydrogenases dmxR12 or dmxR8) and hydroxylated at C-5 by dmxR9, yielding the electron-rich aromatic which could eliminate H(2)O to form the ortho-quinonemethide, followed by tautomerisation to paraquinone and complete the formal reduction to produce the 10-methylgroup. Conjugate addition of C-4a-OH to the resulting paraquinone by the monooxygenase dmxR10 then gives cyclohexadienone, which is then reduced at C-5 by the short chain dehydrogenase dmxR3 to give the dihydroxanthone. The 6,7-epoxide in the cryptosporioptides could be introduced by the cytochrome P450 monooxygenase dmxL3. The highly reducing PKS dmxL2 manufactures butyrate, which is further carboxylated by dmxL1 to form ethylmalonate. It is not yet clear whether the carboxylation occurs while the butyrate is attached to the ACP of dmxL2, but this unusual fungal metabolite could then be esterified to O-5 by the O-acetyltransferase dmxR13. Finally, dimerization performed by dmxR5 gives the observed dimers cryptosporioptides A, B and C as the final products of the pathway. This Cryptosporiopsis sp. (strain 8999) protein is Atrochrysone carboxyl ACP thioesterase dmxR1.